A 2238-amino-acid polypeptide reads, in one-letter code: Protein Ycf2 (2238 aa).

1579-1586 lines the ATP pocket; the sequence is GSIGTGRS.

It belongs to the Ycf2 family.

The protein localises to the plastid. Probable ATPase of unknown function. Its presence in a non-photosynthetic plant (Epifagus virginiana) and experiments in tobacco indicate that it has an essential function which is probably not related to photosynthesis. The polypeptide is Protein Ycf2 (Cuscuta exaltata (Tall dodder)).